Consider the following 257-residue polypeptide: MLAKRIVPCLDVKEGKVVKGVQFRNHEIVGDIVPLAARYADEGADELVFYDITASAHDRVIDKSWVSRVAERIDIPFCVAGGIRTIEQAREKLAFGADKISINSPALTDPSLIERLQEEFGRQCIVIGIDSYYDHISDSYKVKQFTGDEAATKDTQWYTQDWVEEVQKRGCGEIVLNVMNQDGVRQGYDIEQLSMIRSLCDVPLIASGGAGTMAHFKDVFALAKVDAALAASVFHKGIIDIQALKRYLRDNQIAVRV.

Active-site residues include aspartate 11 and aspartate 130.

The protein belongs to the HisA/HisF family. In terms of assembly, heterodimer of HisH and HisF.

It localises to the cytoplasm. The enzyme catalyses 5-[(5-phospho-1-deoxy-D-ribulos-1-ylimino)methylamino]-1-(5-phospho-beta-D-ribosyl)imidazole-4-carboxamide + L-glutamine = D-erythro-1-(imidazol-4-yl)glycerol 3-phosphate + 5-amino-1-(5-phospho-beta-D-ribosyl)imidazole-4-carboxamide + L-glutamate + H(+). It participates in amino-acid biosynthesis; L-histidine biosynthesis; L-histidine from 5-phospho-alpha-D-ribose 1-diphosphate: step 5/9. Functionally, IGPS catalyzes the conversion of PRFAR and glutamine to IGP, AICAR and glutamate. The HisF subunit catalyzes the cyclization activity that produces IGP and AICAR from PRFAR using the ammonia provided by the HisH subunit. The polypeptide is Imidazole glycerol phosphate synthase subunit HisF (Shewanella piezotolerans (strain WP3 / JCM 13877)).